The following is a 214-amino-acid chain: Large ribosomal subunit protein uL16-like (214 aa).

This sequence belongs to the universal ribosomal protein uL16 family. In terms of assembly, component of a male germ cell-specific 60S large ribosomal subunit (LSU), which contains RPL10L and RPL39L, instead of RPL10 and RPL39 paralogs. The composition of the rest of the complex is similar to classical ribosomes. Testis-specific.

It is found in the cytoplasm. Functionally, testis-specific component of the ribosome, which is required for the transition from prophase to metaphase in male meiosis I. Compensates for the inactivated X-linked RPL10 paralog during spermatogenesis. The ribosome is a large ribonucleoprotein complex responsible for the synthesis of proteins in the cell. The male germ cell-specific ribosome displays a ribosomal polypeptide exit tunnel of distinct size and charge states compared with the classical ribosome. It is responsible for regulating the biosynthesis and folding of a subset of male germ-cell-specific proteins that are essential for the formation of sperm. In Mus musculus (Mouse), this protein is Large ribosomal subunit protein uL16-like.